Here is a 291-residue protein sequence, read N- to C-terminus: Phosphate-binding protein PstS 2 (291 aa).

The signal sequence occupies residues 1–21 (MKFKKMLTLAAIGLSGFGLVA). Cysteine 22 carries the N-palmitoyl cysteine lipid modification. The S-diacylglycerol cysteine moiety is linked to residue cysteine 22.

Belongs to the PstS family. In terms of assembly, the complex is composed of two ATP-binding proteins (PstB), two transmembrane proteins (PstC and PstA) and a solute-binding protein (PstS).

The protein resides in the cell membrane. Part of the ABC transporter complex PstSACB involved in phosphate import. The chain is Phosphate-binding protein PstS 2 (pstS2) from Streptococcus pneumoniae serotype 4 (strain ATCC BAA-334 / TIGR4).